The following is a 604-amino-acid chain: uncharacterized protein (604 aa).

The N-terminal stretch at 1 to 19 (MIVRILLLFIALFTFGVQA) is a signal peptide.

The protein to H.influenzae HbpA.

This is an uncharacterized protein from Escherichia coli (strain K12).